Consider the following 146-residue polypeptide: Basic phospholipase A2 beta-bungarotoxin A2 chain (146 aa).

The signal sequence occupies residues M1–A19. The propeptide occupies S20 to L27. Cystine bridges form between C54–C145, C56–C72, C71–C126, C78–C119, C87–C112, and C105–C117. Residues Y55, G57, and G59 each contribute to the Ca(2+) site. The active site involves H75. D76 contacts Ca(2+). The active site involves D120.

The protein belongs to the phospholipase A2 family. Group I subfamily. D49 sub-subfamily. As to quaternary structure, heterodimer; disulfide-linked. The A chain has phospholipase A2 activity and the B chain shows homology with the basic protease inhibitors. Ca(2+) is required as a cofactor. Expressed by the venom gland.

It localises to the secreted. It carries out the reaction a 1,2-diacyl-sn-glycero-3-phosphocholine + H2O = a 1-acyl-sn-glycero-3-phosphocholine + a fatty acid + H(+). Functionally, snake venom phospholipase A2 (PLA2) that inhibits neuromuscular transmission by blocking acetylcholine release from the nerve termini. PLA2 catalyzes the calcium-dependent hydrolysis of the 2-acyl groups in 3-sn-phosphoglycerides. The sequence is that of Basic phospholipase A2 beta-bungarotoxin A2 chain from Bungarus flaviceps flaviceps (Red-headed krait).